A 233-amino-acid polypeptide reads, in one-letter code: Partner of Y14 and mago (233 aa).

The tract at residues 1–153 is disordered; it reads MTTYSTDSQG…SNNSDSTVDE (153 aa). Residues 62-97 are a coiled coil; sequence EVVQKAKEKRERERLRQAREEQQRKEQQNKKQQAGA. Residues 65–90 show a composition bias toward basic and acidic residues; it reads QKAKEKRERERLRQAREEQQRKEQQN. A compositionally biased stretch (low complexity) spans 122–142; sequence KQPQQHTKSSQQKSTTAAAAA. Positions 167 to 199 form a coiled coil; sequence ADAQQLEVAKKLRKLRKKIREIEAIETKLRSTD.

The protein belongs to the pym family. In terms of assembly, interacts (via N-terminus) with mago and tsu/Y14; the interaction is direct.

It localises to the cytoplasm. Its subcellular location is the nucleus. Its function is as follows. Regulator of the exon junction complex (EJC), a multiprotein complex that associates immediately upstream of the exon-exon junction on mRNAs and serves as a positional landmarks for the intron exon structure of genes and directs post-transcriptional processes in the cytoplasm such as mRNA export, nonsense-mediated mRNA decay (NMD) or translation. The sequence is that of Partner of Y14 and mago from Anopheles gambiae (African malaria mosquito).